The sequence spans 819 residues: MSFVTTIRDYAETLNSISDSLGQNFTVRSFILETIVYIFTTCRSCLFYILSFQWIHDFTLLPIVLPEFSSALFREKFFLETPSKVFFDFLEISDLQQNKFLLGFFNSFFLSLPFSVIHILSLRRLLIQGRPAGVYTIGGYLIGQLVFLTCVVFGIRQVLVPWLTLEPFNYLLGIILLFRVIYSMTRENLIELKGWSNPRYTNFFLVSFVLAWCEQTSCFQYLGNITLSSNVTILESFSSTSSISTFFTHTSYLLGIAIGSVLFSLFWGWVFLQVKNLCIFYTPLFTSSFLQFFNKTSFVLALALSLTSIPFYSFEYLVTGPLGFVSQDSVFKNTLLDQTLIKDPGKGLTGLSSLERNFQYLDVDVSPFDRGEYLTVPEVPQNLSFEELNYRGEFDWTLRNLKVSGITDSRSGFFTLSKLFKKENKKSLDSQKQLSSQEISERNPLLSELPLVFRVDLATHYDILNRYRQFYDGNVEESDSDPLLQRPIETISDSSFPSSGEAPQPRVENTIESKIKNKYYSNPVYKNLLALDIDLFLKRQPKTFQVNADQEIDLYTKRKMLEYYTNSLNSYSQLPYFETFDSFFDGAKTFSNKVYNQQFKGTLRSVRRLFTVRNDFVSSSEKLESKTEKVLKFDQPLYQFAEKQPFSPYHEELAQKPEQVLPRAKIGGISFVNTPLYAGWDEHLRKFVITNKLLPRTFAGYKVKIEPQTLKNFTNYSVKQTTKIKFTRWPLSEEKLQLSKQDSSVPYVTLFKILDEKTKETFAENKYLSFPANFELVEFSESQNEKGTTEKLKKPTLVPNRGGFVWPGNSKFKLPLLSN.

A run of 6 helical transmembrane segments spans residues 45–65, 100–120, 135–155, 158–178, 252–272, and 298–318; these read CLFYILSFQWIHDFTLLPIVL, FLLGFFNSFFLSLPFSVIHIL, YTIGGYLIGQLVFLTCVVFGI, VLVPWLTLEPFNYLLGIILLF, YLLGIAIGSVLFSLFWGWVFL, and FVLALALSLTSIPFYSFEYLV.

Belongs to the ycf78 family.

It localises to the plastid. The protein localises to the chloroplast membrane. This is an uncharacterized protein from Chlorella vulgaris (Green alga).